Reading from the N-terminus, the 363-residue chain is NAD(P)H-quinone oxidoreductase subunit 1, chloroplastic (363 aa).

The next 7 membrane-spanning stretches (helical) occupy residues 30-50, 104-124, 129-149, 248-268, 269-289, 300-320, and 336-356; these read FIPI…IVWL, IAVI…HLVL, IGVF…LMSG, YSGI…LVSS, LFVT…IFVF, VFEP…FLFI, and LLNL…LLTT.

The protein belongs to the complex I subunit 1 family. As to quaternary structure, NDH is composed of at least 16 different subunits, 5 of which are encoded in the nucleus.

It localises to the plastid. The protein resides in the chloroplast thylakoid membrane. The catalysed reaction is a plastoquinone + NADH + (n+1) H(+)(in) = a plastoquinol + NAD(+) + n H(+)(out). The enzyme catalyses a plastoquinone + NADPH + (n+1) H(+)(in) = a plastoquinol + NADP(+) + n H(+)(out). Functionally, NDH shuttles electrons from NAD(P)H:plastoquinone, via FMN and iron-sulfur (Fe-S) centers, to quinones in the photosynthetic chain and possibly in a chloroplast respiratory chain. The immediate electron acceptor for the enzyme in this species is believed to be plastoquinone. Couples the redox reaction to proton translocation, and thus conserves the redox energy in a proton gradient. The sequence is that of NAD(P)H-quinone oxidoreductase subunit 1, chloroplastic from Morus indica (Mulberry).